A 276-amino-acid polypeptide reads, in one-letter code: Pantothenate synthetase (276 aa).

An ATP-binding site is contributed by 26–33; sequence MGFLHEGH. His-33 serves as the catalytic Proton donor. (R)-pantoate is bound at residue Gln-57. Gln-57 contacts beta-alanine. 142–145 provides a ligand contact to ATP; sequence GLKD. Gln-148 serves as a coordination point for (R)-pantoate. ATP contacts are provided by residues Ile-171 and 179 to 182; that span reads KSSR.

Belongs to the pantothenate synthetase family. As to quaternary structure, homodimer.

The protein resides in the cytoplasm. The enzyme catalyses (R)-pantoate + beta-alanine + ATP = (R)-pantothenate + AMP + diphosphate + H(+). It participates in cofactor biosynthesis; (R)-pantothenate biosynthesis; (R)-pantothenate from (R)-pantoate and beta-alanine: step 1/1. Functionally, catalyzes the condensation of pantoate with beta-alanine in an ATP-dependent reaction via a pantoyl-adenylate intermediate. The protein is Pantothenate synthetase of Exiguobacterium sibiricum (strain DSM 17290 / CCUG 55495 / CIP 109462 / JCM 13490 / 255-15).